We begin with the raw amino-acid sequence, 601 residues long: Translation initiation factor IF-2 (601 aa).

A disordered region spans residues 54-101 (GHTASAEPAPAQASGSPASPAQTEAQEAPQPTATATAEREPAAPPARE). Low complexity predominate over residues 57–89 (ASAEPAPAQASGSPASPAQTEAQEAPQPTATAT). A tr-type G domain is found at 104–273 (HRAPVVTIMG…SLTAELEDLR (170 aa)). The G1 stretch occupies residues 113–120 (GHVDHGKT). 113-120 (GHVDHGKT) is a GTP binding site. A G2 region spans residues 138–142 (GITQH). The interval 159 to 162 (DTPG) is G3. GTP-binding positions include 159–163 (DTPGH) and 213–216 (NKVD). Residues 213-216 (NKVD) are G4. The G5 stretch occupies residues 249-251 (SAK).

This sequence belongs to the TRAFAC class translation factor GTPase superfamily. Classic translation factor GTPase family. IF-2 subfamily.

The protein resides in the cytoplasm. One of the essential components for the initiation of protein synthesis. Protects formylmethionyl-tRNA from spontaneous hydrolysis and promotes its binding to the 30S ribosomal subunits. Also involved in the hydrolysis of GTP during the formation of the 70S ribosomal complex. This chain is Translation initiation factor IF-2, found in Deinococcus geothermalis (strain DSM 11300 / CIP 105573 / AG-3a).